We begin with the raw amino-acid sequence, 766 residues long: Phosphoribosylformylglycinamidine synthase subunit PurL (766 aa).

The active site involves His46. Positions 49 and 88 each coordinate ATP. Residue Glu90 coordinates Mg(2+). Residues 91 to 94 and Arg113 each bind substrate; that span reads SHNH. The active-site Proton acceptor is His92. A Mg(2+)-binding site is contributed by Asp114. Gln237 is a binding site for substrate. Asp265 is a binding site for Mg(2+). A substrate-binding site is contributed by 309–311; sequence ESQ. Positions 520 and 557 each coordinate ATP. Asn558 serves as a coordination point for Mg(2+). Ser560 is a binding site for substrate.

Belongs to the FGAMS family. As to quaternary structure, monomer. Part of the FGAM synthase complex composed of 1 PurL, 1 PurQ and 2 PurS subunits.

It localises to the cytoplasm. The catalysed reaction is N(2)-formyl-N(1)-(5-phospho-beta-D-ribosyl)glycinamide + L-glutamine + ATP + H2O = 2-formamido-N(1)-(5-O-phospho-beta-D-ribosyl)acetamidine + L-glutamate + ADP + phosphate + H(+). The protein operates within purine metabolism; IMP biosynthesis via de novo pathway; 5-amino-1-(5-phospho-D-ribosyl)imidazole from N(2)-formyl-N(1)-(5-phospho-D-ribosyl)glycinamide: step 1/2. Functionally, part of the phosphoribosylformylglycinamidine synthase complex involved in the purines biosynthetic pathway. Catalyzes the ATP-dependent conversion of formylglycinamide ribonucleotide (FGAR) and glutamine to yield formylglycinamidine ribonucleotide (FGAM) and glutamate. The FGAM synthase complex is composed of three subunits. PurQ produces an ammonia molecule by converting glutamine to glutamate. PurL transfers the ammonia molecule to FGAR to form FGAM in an ATP-dependent manner. PurS interacts with PurQ and PurL and is thought to assist in the transfer of the ammonia molecule from PurQ to PurL. In Synechococcus sp. (strain JA-3-3Ab) (Cyanobacteria bacterium Yellowstone A-Prime), this protein is Phosphoribosylformylglycinamidine synthase subunit PurL.